Here is a 146-residue protein sequence, read N- to C-terminus: Hemoglobin subunit beta (146 aa).

Val-1 carries the post-translational modification N-acetylvaline. The 145-residue stretch at 2–146 (HLTDAEKAAV…VATALAHKYH (145 aa)) folds into the Globin domain. Ser-44 bears the Phosphoserine mark. Lys-59 is modified (N6-acetyllysine). Residue His-63 coordinates heme b. Lys-82 carries the post-translational modification N6-acetyllysine. A heme b-binding site is contributed by His-92. At Cys-93 the chain carries S-nitrosocysteine. Lys-144 carries the post-translational modification N6-acetyllysine.

The protein belongs to the globin family. In terms of assembly, heterotetramer of two alpha chains and two beta chains. Red blood cells.

In terms of biological role, involved in oxygen transport from the lung to the various peripheral tissues. The protein is Hemoglobin subunit beta (HBB) of Spalax ehrenbergi (Middle East blind mole rat).